The following is a 232-amino-acid chain: DNA repair and recombination protein RadB (232 aa).

It belongs to the eukaryotic RecA-like protein family. RadB subfamily.

Its function is as follows. Involved in DNA repair and in homologous recombination. May regulate the cleavage reactions of the branch-structured DNA. Has a very weak ATPase activity that is not stimulated by DNA. Binds DNA but does not promote DNA strands exchange. This chain is DNA repair and recombination protein RadB, found in Methanosphaera stadtmanae (strain ATCC 43021 / DSM 3091 / JCM 11832 / MCB-3).